A 130-amino-acid polypeptide reads, in one-letter code: Small ribosomal subunit protein uS9 (130 aa).

The protein belongs to the universal ribosomal protein uS9 family.

The sequence is that of Small ribosomal subunit protein uS9 from Vibrio campbellii (strain ATCC BAA-1116).